A 314-amino-acid polypeptide reads, in one-letter code: THAP domain-containing protein 11 (314 aa).

The THAP-type zinc finger occupies 1 to 80; the sequence is MPGFTCCVPG…TYTVRVPTIF (80 aa). The interval 85–111 is disordered; that stretch reads VNERKVARRPAGAAAARRRQQQQQQQQ. The span at 93–111 shows a compositional bias: low complexity; that stretch reads RPAGAAAARRRQQQQQQQQ. Positions 243 to 246 match the HCFC1-binding motif (HBM) motif; the sequence is DHSY. Positions 255–305 form a coiled coil; it reads EELLRKLNEQRDILALMEVKMKEMKGSIRHLRLTEAKLREELREKDRLLAM.

It belongs to the THAP11 family. In terms of assembly, forms homodimers. Interacts via HBM with HCFC1. Forms a complex with HCFC1 and ZNF143. In terms of tissue distribution, expressed in skin fibroblasts.

Its subcellular location is the nucleus. It localises to the cytoplasm. Its function is as follows. Transcription factor, which has both transcriptional activation and repression activities. Also modulates chromatin accessibility. In complex with HCFC1 and ZNF143, regulates the expression of several genes, including AP2S1, ESCO2, OPHN1, RBL1, UBXN8 and ZNF32. May regulate the expression of genes that encode both cytoplasmic and mitochondrial ribosomal proteins. Required for normal mitochondrial development and function. Regulates mitochondrial gene expression, including that of components of the electron transport chain. Involved in the maintainance of pluripotency in early embryonic cells, possibly through its action on mitochondrial maturation which is required to meet high energy demands of these cells. Required for early development of retina, preventing premature exit of retinal progenitor cells from the cell cycle. This effect may also be mediated by its action on mitochondria. Through the regulation of MMACHC gene expression, controls cobalamin metabolism. Required for normal brain development and neural precursor differentiation. Involved in cell growth. This is THAP domain-containing protein 11 (THAP11) from Homo sapiens (Human).